A 239-amino-acid chain; its full sequence is Phosphoribosylaminoimidazole-succinocarboxamide synthase (239 aa).

This sequence belongs to the SAICAR synthetase family.

The enzyme catalyses 5-amino-1-(5-phospho-D-ribosyl)imidazole-4-carboxylate + L-aspartate + ATP = (2S)-2-[5-amino-1-(5-phospho-beta-D-ribosyl)imidazole-4-carboxamido]succinate + ADP + phosphate + 2 H(+). Its pathway is purine metabolism; IMP biosynthesis via de novo pathway; 5-amino-1-(5-phospho-D-ribosyl)imidazole-4-carboxamide from 5-amino-1-(5-phospho-D-ribosyl)imidazole-4-carboxylate: step 1/2. The polypeptide is Phosphoribosylaminoimidazole-succinocarboxamide synthase (Bacillus cereus (strain B4264)).